Consider the following 127-residue polypeptide: Apolipoprotein C-IV (127 aa).

A signal peptide spans 1-27 (MSLLRNRLQDLPALCLCVLVLACIGAC).

This sequence belongs to the apolipoprotein C4 family.

The protein resides in the secreted. May participate in lipoprotein metabolism. The chain is Apolipoprotein C-IV (APOC4) from Papio anubis (Olive baboon).